The following is a 358-amino-acid chain: Peptide chain release factor 1 (358 aa).

An N5-methylglutamine modification is found at Gln233.

The protein belongs to the prokaryotic/mitochondrial release factor family. Post-translationally, methylated by PrmC. Methylation increases the termination efficiency of RF1.

It localises to the cytoplasm. Functionally, peptide chain release factor 1 directs the termination of translation in response to the peptide chain termination codons UAG and UAA. The polypeptide is Peptide chain release factor 1 (Clostridium botulinum (strain Loch Maree / Type A3)).